The primary structure comprises 295 residues: Keratin-like protein KRT222 (295 aa).

One can recognise an IF rod domain in the interval 1–150 (MELSQLLNEI…HLLEKEEIRY (150 aa)). Residues 2–150 (ELSQLLNEIR…HLLEKEEIRY (149 aa)) adopt a coiled-coil conformation.

It belongs to the intermediate filament family.

This Homo sapiens (Human) protein is Keratin-like protein KRT222 (KRT222).